The sequence spans 59 residues: Large ribosomal subunit protein uL30 (59 aa).

This sequence belongs to the universal ribosomal protein uL30 family. In terms of assembly, part of the 50S ribosomal subunit.

In Sodalis glossinidius (strain morsitans), this protein is Large ribosomal subunit protein uL30.